The chain runs to 704 residues: Fibulin-1 (704 aa).

The N-terminal stretch at 1-25 is a signal peptide; that stretch reads MDKLRGARPLRLLLLLLALLPALRG. Disulfide bonds link Cys33/Cys59, Cys34/Cys66, Cys47/Cys67, Cys76/Cys107, Cys89/Cys108, Cys110/Cys134, Cys111/Cys141, Cys124/Cys142, Cys181/Cys191, Cys187/Cys200, Cys202/Cys215, Cys221/Cys234, Cys228/Cys243, Cys249/Cys261, Cys267/Cys280, Cys274/Cys289, Cys295/Cys307, Cys313/Cys326, Cys320/Cys335, Cys342/Cys355, Cys361/Cys374, Cys368/Cys383, Cys385/Cys398, Cys404/Cys416, Cys412/Cys425, Cys427/Cys440, Cys446/Cys455, Cys451/Cys464, Cys466/Cys480, Cys486/Cys499, Cys495/Cys508, Cys510/Cys524, Cys530/Cys543, Cys537/Cys552, and Cys557/Cys578. Anaphylatoxin-like domains follow at residues 33-74, 75-109, and 110-142; these read CCDK…LEEH, YCSD…KCCY, and CCLL…RACC. Asn96 carries N-linked (GlcNAc...) asparagine glycosylation. One can recognise an EGF-like 1 domain in the interval 177–216; that stretch reads LHDGCRGGGPCSQQCRDTGSSYVCSCFVGYQLQPDGVNCE. Residues 217–262 enclose the EGF-like 2; calcium-binding domain; the sequence is DINECITGTHSCGIGQTCVNTLGSFRCQRDTSCGTGYELTDDSRCK. An EGF-like 3; calcium-binding domain is found at 263–308; the sequence is DIDECETGTHNCPPDFICQNTPGSFRCRPKLQCMNGFIQDALGNCI. In terms of domain architecture, EGF-like 4; calcium-binding spans 309–356; that stretch reads DINECLSTNMPCPAGQICINTDGSYTCQRISPSCGRGYHLNEDGTRCV. The EGF-like 5; calcium-binding domain occupies 357-399; sequence DVDECSSSDQPCGEGHVCINGPGNYRCECKSGYSFDVISRTCI. Residues 357-441 form a self-association and FN1-binding region; sequence DVDECSSSDQ…KLSSDGRSCE (85 aa). The 42-residue stretch at 400-441 folds into the EGF-like 6; calcium-binding domain; sequence DINECRRYPGRLCAHKCENTPGSYYCTCTMGFKLSSDGRSCE. An EGF-like 7; calcium-binding domain is found at 442–481; that stretch reads DLNECESSPCSQECANVYGSYQCYCRRGFQLSDIDGISCE. The 44-residue stretch at 482–525 folds into the EGF-like 8; calcium-binding domain; it reads DIDECALPTGGHICSFRCINIPGSFQCTCPSTGYRLAPNARNCQ. The region spanning 526–579 is the EGF-like 9; calcium-binding domain; it reads DIDECVAETHNCSFNETCFNIQGGFRCLSLECPENYRKSGDTVRLEKTDTIRCI. N-linked (GlcNAc...) asparagine glycans are attached at residues Asn536 and Asn540.

The protein belongs to the fibulin family. As to quaternary structure, homomultimerizes and interacts with various extracellular matrix components.

Its subcellular location is the secreted. The protein localises to the extracellular space. It localises to the extracellular matrix. In terms of biological role, incorporated into fibronectin-containing matrix fibers. May play a role in cell adhesion and migration along protein fibers within the extracellular matrix (ECM). Could be important for certain developmental processes and contribute to the supramolecular organization of ECM architecture, in particular to those of basement membranes. This chain is Fibulin-1 (FBLN1), found in Gallus gallus (Chicken).